A 414-amino-acid chain; its full sequence is Transforming growth factor beta-2 proprotein (414 aa).

Positions 1 to 20 are cleaved as a signal peptide; the sequence is MHYCVLSAFLLLHLVTAALS. Residues N72, N140, and N241 are each glycosylated (N-linked (GlcNAc...) asparagine). 4 disulfide bridges follow: C309/C318, C317/C380, C346/C411, and C350/C413.

Belongs to the TGF-beta family. As to quaternary structure, interacts with the serine proteases, HTRA1 and HTRA3. Interacts with ASPN. Interacts with MFAP5. Interacts with Transforming growth factor beta-2 (TGF-beta-2) chain; interaction is non-covalent and maintains (TGF-beta-2) in a latent state. Interacts with LRRC32/GARP; leading to regulate activation of TGF-beta-2. Interacts with NREP; the interaction results in a decrease in TGFB2 autoinduction. In terms of assembly, transforming growth factor beta-2: Homodimer; disulfide-linked. Transforming growth factor beta-2: Interacts with TGF-beta receptors (TGFBR1 and TGFBR2), leading to signal transduction. The precursor proprotein is cleaved in the Golgi apparatus to form Transforming growth factor beta-2 (TGF-beta-2) and Latency-associated peptide (LAP) chains, which remain non-covalently linked, rendering TGF-beta-2 inactive.

The protein localises to the secreted. It localises to the extracellular space. It is found in the extracellular matrix. Its function is as follows. Precursor of the Latency-associated peptide (LAP) and Transforming growth factor beta-2 (TGF-beta-2) chains, which constitute the regulatory and active subunit of TGF-beta-2, respectively. Required to maintain the Transforming growth factor beta-2 (TGF-beta-2) chain in a latent state during storage in extracellular matrix. Associates non-covalently with TGF-beta-2 and regulates its activation via interaction with 'milieu molecules', such as LTBP1 and LRRC32/GARP, that control activation of TGF-beta-2. Functionally, multifunctional protein that regulates various processes such as angiogenesis and heart development. Activation into mature form follows different steps: following cleavage of the proprotein in the Golgi apparatus, Latency-associated peptide (LAP) and Transforming growth factor beta-2 (TGF-beta-2) chains remain non-covalently linked rendering TGF-beta-2 inactive during storage in extracellular matrix. At the same time, LAP chain interacts with 'milieu molecules', such as LTBP1 and LRRC32/GARP, that control activation of TGF-beta-2 and maintain it in a latent state during storage in extracellular milieus. Once activated following release of LAP, TGF-beta-2 acts by binding to TGF-beta receptors (TGFBR1 and TGFBR2), which transduce signal. This Mustela putorius furo (European domestic ferret) protein is Transforming growth factor beta-2 proprotein (TGFB2).